A 110-amino-acid polypeptide reads, in one-letter code: Large ribosomal subunit protein uL24 (110 aa).

Belongs to the universal ribosomal protein uL24 family. As to quaternary structure, part of the 50S ribosomal subunit.

Functionally, one of two assembly initiator proteins, it binds directly to the 5'-end of the 23S rRNA, where it nucleates assembly of the 50S subunit. In terms of biological role, one of the proteins that surrounds the polypeptide exit tunnel on the outside of the subunit. This is Large ribosomal subunit protein uL24 from Frankia alni (strain DSM 45986 / CECT 9034 / ACN14a).